The following is a 1097-amino-acid chain: DNA-directed RNA polymerase subunit beta (1097 aa).

The tract at residues 1072 to 1097 is disordered; that stretch reads QDINPRRNTPSRPTYESLGTSEYEED. Over residues 1077–1091 the composition is skewed to polar residues; the sequence is RRNTPSRPTYESLGT.

It belongs to the RNA polymerase beta chain family. As to quaternary structure, in cyanobacteria the RNAP catalytic core is composed of 2 alpha, 1 beta, 1 beta', 1 gamma and 1 omega subunit. When a sigma factor is associated with the core the holoenzyme is formed, which can initiate transcription.

The enzyme catalyses RNA(n) + a ribonucleoside 5'-triphosphate = RNA(n+1) + diphosphate. Its function is as follows. DNA-dependent RNA polymerase catalyzes the transcription of DNA into RNA using the four ribonucleoside triphosphates as substrates. The sequence is that of DNA-directed RNA polymerase subunit beta from Prochlorococcus marinus (strain MIT 9301).